The sequence spans 485 residues: Glycogen synthase (485 aa).

Lys21 is an ADP-alpha-D-glucose binding site.

The protein belongs to the glycosyltransferase 1 family. Bacterial/plant glycogen synthase subfamily.

It catalyses the reaction [(1-&gt;4)-alpha-D-glucosyl](n) + ADP-alpha-D-glucose = [(1-&gt;4)-alpha-D-glucosyl](n+1) + ADP + H(+). It functions in the pathway glycan biosynthesis; glycogen biosynthesis. In terms of biological role, synthesizes alpha-1,4-glucan chains using ADP-glucose. The chain is Glycogen synthase from Pseudomonas savastanoi pv. phaseolicola (strain 1448A / Race 6) (Pseudomonas syringae pv. phaseolicola (strain 1448A / Race 6)).